The chain runs to 966 residues: Leucine--tRNA ligase (966 aa).

The short motif at 41–51 (PYLNGNLHAGH) is the 'HIGH' region element. The 'KMSKS' region motif lies at 632–636 (KMSKS). ATP is bound at residue Lys635.

It belongs to the class-I aminoacyl-tRNA synthetase family.

The protein localises to the cytoplasm. The catalysed reaction is tRNA(Leu) + L-leucine + ATP = L-leucyl-tRNA(Leu) + AMP + diphosphate. This chain is Leucine--tRNA ligase, found in Methanosarcina barkeri (strain Fusaro / DSM 804).